We begin with the raw amino-acid sequence, 183 residues long: Putative NAD(P)H nitroreductase YdjA (183 aa).

Residues 10-12 (RRS), Arg35, and His39 each bind FMN. 121-126 (AAVAQG) lines the NAD(+) pocket. 131-133 (WRS) contacts FMN.

The protein belongs to the nitroreductase family. In terms of assembly, homodimer. The cofactor is FMN.

The protein is Putative NAD(P)H nitroreductase YdjA (ydjA) of Escherichia coli O157:H7.